We begin with the raw amino-acid sequence, 310 residues long: 17-beta-hydroxysteroid dehydrogenase type 3 (310 aa).

Position 48–77 (48–77 (GQWAVITGAGDGIGKAYSFELAKRGLNVVL)) interacts with NADP(+). Ser-185 is a binding site for substrate. Tyr-198 functions as the Proton acceptor in the catalytic mechanism.

This sequence belongs to the short-chain dehydrogenases/reductases (SDR) family. 17-beta-HSD 3 subfamily. In terms of tissue distribution, testis.

It is found in the endoplasmic reticulum. It carries out the reaction a 17beta-hydroxy steroid + NADP(+) = a 17-oxo steroid + NADPH + H(+). It catalyses the reaction testosterone + NADP(+) = androst-4-ene-3,17-dione + NADPH + H(+). The enzyme catalyses 17beta-estradiol + NADP(+) = estrone + NADPH + H(+). The catalysed reaction is 3beta-hydroxyandrost-5-en-17-one + NADPH + H(+) = androst-5-en-3beta,17beta-diol + NADP(+). It carries out the reaction 17beta-hydroxy-5alpha-androstan-3-one + NADP(+) = 5alpha-androstan-3,17-dione + NADPH + H(+). It catalyses the reaction androsterone + NADPH + H(+) = 5alpha-androstane-3alpha,17beta-diol + NADP(+). The enzyme catalyses 3beta-hydroxy-5alpha-androstan-17-one + NADPH + H(+) = 5alpha-androstane-3beta,17beta-diol + NADP(+). The catalysed reaction is androst-4-ene-3,11,17-trione + NADPH + H(+) = 17beta-hydroxyandrost-4-ene-3,11-dione + NADP(+). It carries out the reaction 11beta-hydroxyandrost-4-ene-3,17-dione + NADPH + H(+) = 11beta,17beta-dihydroxyandrost-4-ene-3-one + NADP(+). The protein operates within hormone biosynthesis; testosterone biosynthesis. Its pathway is steroid metabolism. In terms of biological role, catalyzes the conversion of 17-oxosteroids to 17beta-hydroxysteroids. Favors the reduction of androstenedione to testosterone. Testosterone is the key androgen driving male development and function. Uses NADPH while the two other EDH17B enzymes use NADH. Androgens such as epiandrosterone, dehydroepiandrosterone, androsterone and androstanedione are accepted as substrates and reduced at C-17. Can reduce 11-ketoandrostenedione as well as 11beta-hydroxyandrostenedione at C-17 to the respective testosterone forms. The protein is 17-beta-hydroxysteroid dehydrogenase type 3 of Homo sapiens (Human).